The sequence spans 105 residues: Nitrogen fixation nifHD2 region GlnB-like protein 1 (105 aa).

The protein belongs to the P(II) protein family.

In terms of biological role, could be involved in the regulation of nitrogen fixation. The protein is Nitrogen fixation nifHD2 region GlnB-like protein 1 of Methanosarcina barkeri.